Reading from the N-terminus, the 253-residue chain is Probable ATP-dependent transporter ycf16 (253 aa).

The ABC transporter domain occupies 6 to 250 (LEVTNLHAAV…EKYGYDWLKN (245 aa)). 38 to 45 (GKNGSGKS) contributes to the ATP binding site.

It belongs to the ABC transporter superfamily. Ycf16 family.

It localises to the plastid. Its subcellular location is the chloroplast. The sequence is that of Probable ATP-dependent transporter ycf16 (ycf16) from Guillardia theta (Cryptophyte).